We begin with the raw amino-acid sequence, 484 residues long: Aspartyl/glutamyl-tRNA(Asn/Gln) amidotransferase subunit B (484 aa).

It belongs to the GatB/GatE family. GatB subfamily. Heterotrimer of A, B and C subunits.

The catalysed reaction is L-glutamyl-tRNA(Gln) + L-glutamine + ATP + H2O = L-glutaminyl-tRNA(Gln) + L-glutamate + ADP + phosphate + H(+). It catalyses the reaction L-aspartyl-tRNA(Asn) + L-glutamine + ATP + H2O = L-asparaginyl-tRNA(Asn) + L-glutamate + ADP + phosphate + 2 H(+). Functionally, allows the formation of correctly charged Asn-tRNA(Asn) or Gln-tRNA(Gln) through the transamidation of misacylated Asp-tRNA(Asn) or Glu-tRNA(Gln) in organisms which lack either or both of asparaginyl-tRNA or glutaminyl-tRNA synthetases. The reaction takes place in the presence of glutamine and ATP through an activated phospho-Asp-tRNA(Asn) or phospho-Glu-tRNA(Gln). This is Aspartyl/glutamyl-tRNA(Asn/Gln) amidotransferase subunit B from Bordetella bronchiseptica (strain ATCC BAA-588 / NCTC 13252 / RB50) (Alcaligenes bronchisepticus).